The sequence spans 293 residues: AM-toxin biosynthesis protein 14 (293 aa).

The next 5 membrane-spanning stretches (helical) occupy residues 33 to 53, 73 to 93, 148 to 168, 183 to 203, and 221 to 241; these read SATA…EVYI, IAVN…ALVL, GVLA…LCVW, LVPI…LWIL, and VWCL…TPLT.

Its subcellular location is the membrane. Its pathway is mycotoxin biosynthesis. Its function is as follows. Part of the gene clusters that mediate the biosynthesis of AM-toxins, host-selective toxins (HSTs) causing Alternaria blotch on apple, a worldwide distributed disease. AM-toxins are cyclic depsipeptides containing the 3 residues 2-hydroxy-isovaleric acid (2-HIV), dehydroalanine, L-alanine which are common for all 3 AM-toxins I to III. The fourth precursor is L-alpha-amino-methoxyphenyl-valeric acid (L-Amv) for AM-toxin I, L-alpha-amino-phenyl-valeric acid (L-Apv) for AM-toxin II, and L-alpha-amino-hydroxyphenyl-valeric acid (L-Ahv) for AM-toxin III. AM-toxins have two target sites for affecting susceptible apple cells; they cause invagination of the plasma membrane and electrolyte loss and chloroplast disorganization. The non-ribosomal peptide synthetase AMT1 contains 4 catalytic modules and is responsible for activation of each residue in AM-toxin. The aldo-keto reductase AMT2 catalyzes the conversion of 2-keto-isovaleric acid (2-KIV) to 2-hydroxy-isovaleric acid (2-HIV), one of the precursor residues incorporated by AMT1 during AM-toxin biosynthesis, by reduction of its ketone to an alcohol. The cytochrome P450 monooxygenase AMT3 and the thioesterase AMT4 are also important for AM-toxin production, but their exact function within the AM-toxin biosynthesis are not known yet. Up to 21 proteins (including AMT1 to AMT4) are predicted to be involved in AM-toxin biosynthesis since their expression ishighly up-regulated in AM-toxin-producing cultures. This chain is AM-toxin biosynthesis protein 14, found in Alternaria alternata (Alternaria rot fungus).